The primary structure comprises 569 residues: Proline--tRNA ligase (569 aa).

Belongs to the class-II aminoacyl-tRNA synthetase family. ProS type 1 subfamily. In terms of assembly, homodimer.

It is found in the cytoplasm. It carries out the reaction tRNA(Pro) + L-proline + ATP = L-prolyl-tRNA(Pro) + AMP + diphosphate. Its function is as follows. Catalyzes the attachment of proline to tRNA(Pro) in a two-step reaction: proline is first activated by ATP to form Pro-AMP and then transferred to the acceptor end of tRNA(Pro). As ProRS can inadvertently accommodate and process non-cognate amino acids such as alanine and cysteine, to avoid such errors it has two additional distinct editing activities against alanine. One activity is designated as 'pretransfer' editing and involves the tRNA(Pro)-independent hydrolysis of activated Ala-AMP. The other activity is designated 'posttransfer' editing and involves deacylation of mischarged Ala-tRNA(Pro). The misacylated Cys-tRNA(Pro) is not edited by ProRS. In Dehalococcoides mccartyi (strain ATCC BAA-2266 / KCTC 15142 / 195) (Dehalococcoides ethenogenes (strain 195)), this protein is Proline--tRNA ligase.